The chain runs to 379 residues: Cytochrome b (379 aa).

4 helical membrane-spanning segments follow: residues 33–53 (FGSL…FLAM), 77–98 (WLIR…FIHV), 113–133 (WNIG…GYVL), and 178–198 (FFAF…VHLL). Positions 83 and 97 each coordinate heme b. Residues His182 and His196 each contribute to the heme b site. His201 is an a ubiquinone binding site. Transmembrane regions (helical) follow at residues 226–246 (TKDL…ALFF), 288–308 (LGGV…PLLN), 320–340 (ITQV…WIGG), and 347–367 (XTMI…ILIP).

It belongs to the cytochrome b family. The cytochrome bc1 complex contains 11 subunits: 3 respiratory subunits (MT-CYB, CYC1 and UQCRFS1), 2 core proteins (UQCRC1 and UQCRC2) and 6 low-molecular weight proteins (UQCRH/QCR6, UQCRB/QCR7, UQCRQ/QCR8, UQCR10/QCR9, UQCR11/QCR10 and a cleavage product of UQCRFS1). This cytochrome bc1 complex then forms a dimer. Heme b serves as cofactor.

The protein localises to the mitochondrion inner membrane. Its function is as follows. Component of the ubiquinol-cytochrome c reductase complex (complex III or cytochrome b-c1 complex) that is part of the mitochondrial respiratory chain. The b-c1 complex mediates electron transfer from ubiquinol to cytochrome c. Contributes to the generation of a proton gradient across the mitochondrial membrane that is then used for ATP synthesis. The chain is Cytochrome b (MT-CYB) from Akodon boliviensis (Bolivian grass mouse).